We begin with the raw amino-acid sequence, 1189 residues long: Tyrosine-protein phosphatase non-receptor type 14 (1189 aa).

An FERM domain is found at 21 to 306 (FVTRIRLLDS…TRHKFYKQNK (286 aa)). 7 positions are modified to phosphoserine: serine 314, serine 461, serine 486, serine 591, serine 593, serine 594, and serine 646. The segment at 744–775 (ARIPNRPPPEYPGPRKSVSNGALRQDQGTPLP) is disordered. Residues 760-771 (SVSNGALRQDQG) show a composition bias toward polar residues. Serine 833 carries the phosphoserine modification. One can recognise a Tyrosine-protein phosphatase domain in the interval 911–1182 (VFTEYEQIPN…KFVYQVLVQF (272 aa)). Cysteine 1123 (phosphocysteine intermediate) is an active-site residue. Substrate contacts are provided by residues 1123-1129 (CSAGVGR) and glutamine 1167.

This sequence belongs to the protein-tyrosine phosphatase family. Non-receptor class subfamily. Interacts with FLT4; the interaction is enhanced by stimulation with VEGFC. Interacts (via PPxY motifs) with YAP1 (via WW domains); this interaction leads to the cytoplasmic sequestration of YAP1 and inhibits its transcriptional coactivator activity. Ubiquitinated by the ECS (Elongin BC-CUL2/5-SOCS-box protein)/LRR1 E3 ligase complex and subsequently targeted to proteasomal degradation. Thymus; in cells of both hematopoietic and non-hematopoietic origins.

It localises to the cytoplasm. Its subcellular location is the cytoskeleton. The protein resides in the nucleus. It carries out the reaction O-phospho-L-tyrosyl-[protein] + H2O = L-tyrosyl-[protein] + phosphate. In terms of biological role, protein tyrosine phosphatase which may play a role in the regulation of lymphangiogenesis, cell-cell adhesion, cell-matrix adhesion, cell migration, cell growth and also regulates TGF-beta gene expression, thereby modulating epithelial-mesenchymal transition. Mediates beta-catenin dephosphorylation at adhesion junctions. Acts as a negative regulator of the oncogenic property of YAP, a downstream target of the hippo pathway, in a cell density-dependent manner. May function as a tumor suppressor. This chain is Tyrosine-protein phosphatase non-receptor type 14 (Ptpn14), found in Mus musculus (Mouse).